The primary structure comprises 35 residues: MEVNILAFIATALFILVPTAFLLIIYVKTVSQSVE.

The helical transmembrane segment at 5 to 25 (ILAFIATALFILVPTAFLLII) threads the bilayer.

It belongs to the PsbM family. In terms of assembly, PSII is composed of 1 copy each of membrane proteins PsbA, PsbB, PsbC, PsbD, PsbE, PsbF, PsbH, PsbI, PsbJ, PsbK, PsbL, PsbM, PsbT, PsbX, PsbY, PsbZ, Psb30/Ycf12, at least 3 peripheral proteins of the oxygen-evolving complex and a large number of cofactors. It forms dimeric complexes.

It is found in the plastid. The protein resides in the chloroplast thylakoid membrane. One of the components of the core complex of photosystem II (PSII). PSII is a light-driven water:plastoquinone oxidoreductase that uses light energy to abstract electrons from H(2)O, generating O(2) and a proton gradient subsequently used for ATP formation. It consists of a core antenna complex that captures photons, and an electron transfer chain that converts photonic excitation into a charge separation. This subunit is found at the monomer-monomer interface. This chain is Photosystem II reaction center protein M, found in Amborella trichopoda.